Consider the following 222-residue polypeptide: Cytidylate kinase (222 aa).

Gly11–Thr19 contributes to the ATP binding site.

Belongs to the cytidylate kinase family. Type 1 subfamily.

It is found in the cytoplasm. It catalyses the reaction CMP + ATP = CDP + ADP. It carries out the reaction dCMP + ATP = dCDP + ADP. The chain is Cytidylate kinase from Cupriavidus necator (strain ATCC 17699 / DSM 428 / KCTC 22496 / NCIMB 10442 / H16 / Stanier 337) (Ralstonia eutropha).